The primary structure comprises 101 residues: NAD(P)H-quinone oxidoreductase subunit 4L, chloroplastic (101 aa).

The next 3 membrane-spanning stretches (helical) occupy residues 2 to 22 (MLEY…YGLI), 32 to 52 (MCLE…SDFF), and 61 to 81 (IFSI…PAIV).

This sequence belongs to the complex I subunit 4L family. In terms of assembly, NDH is composed of at least 16 different subunits, 5 of which are encoded in the nucleus.

It localises to the plastid. It is found in the chloroplast thylakoid membrane. It catalyses the reaction a plastoquinone + NADH + (n+1) H(+)(in) = a plastoquinol + NAD(+) + n H(+)(out). The enzyme catalyses a plastoquinone + NADPH + (n+1) H(+)(in) = a plastoquinol + NADP(+) + n H(+)(out). In terms of biological role, NDH shuttles electrons from NAD(P)H:plastoquinone, via FMN and iron-sulfur (Fe-S) centers, to quinones in the photosynthetic chain and possibly in a chloroplast respiratory chain. The immediate electron acceptor for the enzyme in this species is believed to be plastoquinone. Couples the redox reaction to proton translocation, and thus conserves the redox energy in a proton gradient. The chain is NAD(P)H-quinone oxidoreductase subunit 4L, chloroplastic from Populus trichocarpa (Western balsam poplar).